Consider the following 368-residue polypeptide: E3 ubiquitin-protein ligase ATL31 (368 aa).

The signal sequence occupies residues 1 to 23 (MDPIKHISLPVLVLFLLLSVSAG). Residues 46-66 (AVVVVVVIAALFFMGFFTVYI) form a helical membrane-spanning segment. The segment at 124–166 (CAICLNEFEDDETLRLLPKCDHVFHPHCIGAWLQGHVTCPVCR) adopts an RING-type; atypical zinc-finger fold. Serine 247 carries the phosphoserine modification. The interval 342–368 (NKDGEGTSSVQHIGTVGSTSGSLRLPV) is disordered. Polar residues predominate over residues 347–368 (GTSSVQHIGTVGSTSGSLRLPV).

The protein belongs to the RING-type zinc finger family. ATL subfamily.

The protein localises to the membrane. It carries out the reaction S-ubiquitinyl-[E2 ubiquitin-conjugating enzyme]-L-cysteine + [acceptor protein]-L-lysine = [E2 ubiquitin-conjugating enzyme]-L-cysteine + N(6)-ubiquitinyl-[acceptor protein]-L-lysine.. It participates in protein modification; protein ubiquitination. Its function is as follows. E3 ubiquitin-protein ligase that is required for the plant C/N response during seedling growth transition. May be involved in the early steps of the plant defense signaling pathway. The polypeptide is E3 ubiquitin-protein ligase ATL31 (ATL31) (Arabidopsis thaliana (Mouse-ear cress)).